A 321-amino-acid polypeptide reads, in one-letter code: Biotin synthase (321 aa).

The 227-residue stretch at 44–270 folds into the Radical SAM core domain; sequence RGVRIHILNN…DAEVRAAGGR (227 aa). [4Fe-4S] cluster-binding residues include cysteine 59, cysteine 63, and cysteine 66. [2Fe-2S] cluster-binding residues include cysteine 103, cysteine 135, cysteine 195, and arginine 265.

It belongs to the radical SAM superfamily. Biotin synthase family. In terms of assembly, homodimer. The cofactor is [4Fe-4S] cluster. [2Fe-2S] cluster serves as cofactor.

The catalysed reaction is (4R,5S)-dethiobiotin + (sulfur carrier)-SH + 2 reduced [2Fe-2S]-[ferredoxin] + 2 S-adenosyl-L-methionine = (sulfur carrier)-H + biotin + 2 5'-deoxyadenosine + 2 L-methionine + 2 oxidized [2Fe-2S]-[ferredoxin]. It functions in the pathway cofactor biosynthesis; biotin biosynthesis; biotin from 7,8-diaminononanoate: step 2/2. Catalyzes the conversion of dethiobiotin (DTB) to biotin by the insertion of a sulfur atom into dethiobiotin via a radical-based mechanism. In Magnetococcus marinus (strain ATCC BAA-1437 / JCM 17883 / MC-1), this protein is Biotin synthase.